The following is a 325-amino-acid chain: Serine/threonine-protein phosphatase 2A activator 1 (325 aa).

This sequence belongs to the PTPA-type PPIase family.

The protein localises to the cytoplasm. The protein resides in the nucleus. The catalysed reaction is [protein]-peptidylproline (omega=180) = [protein]-peptidylproline (omega=0). In terms of biological role, PPIases accelerate the folding of proteins. It catalyzes the cis-trans isomerization of proline imidic peptide bonds in oligopeptides. Acts as a regulatory subunit for PP2A-like phosphatases modulating their activity or substrate specificity, probably by inducing a conformational change in the catalytic subunit, a direct target of the PPIase. Can reactivate inactive phosphatase PP2A-phosphatase methylesterase complexes (PP2Ai) in presence of ATP and Mg(2+) by dissociating the inactive form from the complex. This is Serine/threonine-protein phosphatase 2A activator 1 (rrd1) from Schizosaccharomyces pombe (strain 972 / ATCC 24843) (Fission yeast).